The following is a 336-amino-acid chain: Formimidoylglutamase (336 aa).

Histidine 129, aspartate 160, histidine 162, aspartate 164, aspartate 257, and aspartate 259 together coordinate Mn(2+).

This sequence belongs to the arginase family. Mn(2+) is required as a cofactor.

The enzyme catalyses N-formimidoyl-L-glutamate + H2O = formamide + L-glutamate. It functions in the pathway amino-acid degradation; L-histidine degradation into L-glutamate; L-glutamate from N-formimidoyl-L-glutamate (hydrolase route): step 1/1. Functionally, catalyzes the conversion of N-formimidoyl-L-glutamate to L-glutamate and formamide. The sequence is that of Formimidoylglutamase from Vibrio vulnificus (strain YJ016).